Here is a 207-residue protein sequence, read N- to C-terminus: Urease accessory protein UreG (207 aa).

GTP is bound at residue 16 to 23 (GPVGSGKT).

The protein belongs to the SIMIBI class G3E GTPase family. UreG subfamily. In terms of assembly, homodimer. UreD, UreF and UreG form a complex that acts as a GTP-hydrolysis-dependent molecular chaperone, activating the urease apoprotein by helping to assemble the nickel containing metallocenter of UreC. The UreE protein probably delivers the nickel.

It is found in the cytoplasm. Its function is as follows. Facilitates the functional incorporation of the urease nickel metallocenter. This process requires GTP hydrolysis, probably effectuated by UreG. This is Urease accessory protein UreG from Blochmanniella pennsylvanica (strain BPEN).